Consider the following 90-residue polypeptide: Mitochondrial import inner membrane translocase subunit Tim10 (90 aa).

The Twin CX3C motif motif lies at 37-62 (CHSKCINKSYGDSDITKQEALCLDRC). 2 disulfides stabilise this stretch: cysteine 37–cysteine 62 and cysteine 41–cysteine 58.

Belongs to the small Tim family. In terms of assembly, heterohexamer; composed of 3 copies of TIM9 and 3 copies of TIM10, named soluble 70 kDa complex. Associates directly with the TIM22 complex, whose core is composed of TIM22 and TIM54. Interacts with the transmembrane regions of multi-pass transmembrane proteins in transit.

It is found in the mitochondrion inner membrane. In terms of biological role, mitochondrial intermembrane chaperone that participates in the import and insertion of multi-pass transmembrane proteins into the mitochondrial inner membrane. Also required for the transfer of beta-barrel precursors from the TOM complex to the sorting and assembly machinery (SAM complex) of the outer membrane. Acts as a chaperone-like protein that protects the hydrophobic precursors from aggregation and guide them through the mitochondrial intermembrane space. In Pichia sorbitophila (strain ATCC MYA-4447 / BCRC 22081 / CBS 7064 / NBRC 10061 / NRRL Y-12695) (Hybrid yeast), this protein is Mitochondrial import inner membrane translocase subunit Tim10 (TIM10).